The sequence spans 344 residues: Uroporphyrinogen decarboxylase (344 aa).

Residues 25–29, D75, Y152, S207, and H323 contribute to the substrate site; that span reads RQAGR.

The protein belongs to the uroporphyrinogen decarboxylase family. Homodimer.

The protein localises to the cytoplasm. The enzyme catalyses uroporphyrinogen III + 4 H(+) = coproporphyrinogen III + 4 CO2. It participates in porphyrin-containing compound metabolism; protoporphyrin-IX biosynthesis; coproporphyrinogen-III from 5-aminolevulinate: step 4/4. Its function is as follows. Catalyzes the decarboxylation of four acetate groups of uroporphyrinogen-III to yield coproporphyrinogen-III. This is Uroporphyrinogen decarboxylase from Roseobacter denitrificans (strain ATCC 33942 / OCh 114) (Erythrobacter sp. (strain OCh 114)).